Consider the following 539-residue polypeptide: Sporozoite-associated protein (539 aa).

Asn-31, Asn-90, Asn-102, Asn-149, and Asn-167 each carry an N-linked (GlcNAc...) asparagine glycan. Positions 126–153 (LTQSPPPAAAPQSPSPRAILSPRNVSKT) are disordered. The span at 192–215 (VVAEKSNTPTTPKTTPNGKWTGKN) shows a compositional bias: low complexity. The tract at residues 192 to 231 (VVAEKSNTPTTPKTTPNGKWTGKNANATIETSNTDHTPPS) is disordered. The span at 216–228 (ANATIETSNTDHT) shows a compositional bias: polar residues. Residues Asn-217, Asn-271, and Asn-288 are each glycosylated (N-linked (GlcNAc...) asparagine). Residues 303–355 (TLISRAQDDKPGTKGGSDETSSSTAASNERQPMFPNDNDDDDIDQTYCPGVES) are disordered. Positions 320–332 (DETSSSTAASNER) are enriched in polar residues. N-linked (GlcNAc...) asparagine glycans are attached at residues Asn-427 and Asn-503.

In terms of tissue distribution, saliva (at protein level). Female salivary gland. Female midgut.

The protein localises to the secreted. Functionally, binds heparan sulfate proteoglycans present on the mammalian cell surface. Modulates host immune responses at the site of inoculation via decreasing the expression of TNF-alpha/TNF, IL-1beta/IL1B, IFN-gamma/IFNG, IL4, MMP9, TGF-beta and ICAM1. In terms of biological role, (Microbial infection) Interacts with the surface of Plasmodium berghei sporozoites. Promotes Plasmodium berghei transmission to the mouse host. Does not affect Plasmodium berghei sporozoite viability. (Microbial infection) Interacts with the surface of Plasmodium falciparum sporozoites. This is Sporozoite-associated protein from Anopheles gambiae (African malaria mosquito).